The following is a 423-amino-acid chain: Glutamyl-tRNA reductase (423 aa).

Residues 49–52 (TCNR), S106, 111–113 (EPQ), and Q117 contribute to the substrate site. The active-site Nucleophile is the C50. 186 to 191 (GAGDTS) is an NADP(+) binding site.

The protein belongs to the glutamyl-tRNA reductase family. As to quaternary structure, homodimer.

It carries out the reaction (S)-4-amino-5-oxopentanoate + tRNA(Glu) + NADP(+) = L-glutamyl-tRNA(Glu) + NADPH + H(+). The protein operates within porphyrin-containing compound metabolism; protoporphyrin-IX biosynthesis; 5-aminolevulinate from L-glutamyl-tRNA(Glu): step 1/2. Functionally, catalyzes the NADPH-dependent reduction of glutamyl-tRNA(Glu) to glutamate 1-semialdehyde (GSA). The polypeptide is Glutamyl-tRNA reductase (Idiomarina loihiensis (strain ATCC BAA-735 / DSM 15497 / L2-TR)).